We begin with the raw amino-acid sequence, 839 residues long: Glycerol-3-phosphate acyltransferase (839 aa).

The HXXXXD motif motif lies at 309–314 (CHRSHI).

The protein belongs to the GPAT/DAPAT family.

It is found in the cell inner membrane. The catalysed reaction is sn-glycerol 3-phosphate + an acyl-CoA = a 1-acyl-sn-glycero-3-phosphate + CoA. The protein operates within phospholipid metabolism; CDP-diacylglycerol biosynthesis; CDP-diacylglycerol from sn-glycerol 3-phosphate: step 1/3. This Pseudomonas fluorescens (strain SBW25) protein is Glycerol-3-phosphate acyltransferase.